The chain runs to 48 residues: MPQLVPFFFVNQVVYAFVILTVLIYAFTKFILPKFVRIFISRIYINKL.

A helical membrane pass occupies residues 4 to 24 (LVPFFFVNQVVYAFVILTVLI).

This sequence belongs to the ATPase protein 8 family. As to quaternary structure, F-type ATPases have 2 components, CF(1) - the catalytic core - and CF(0) - the membrane proton channel.

The protein resides in the mitochondrion membrane. Functionally, mitochondrial membrane ATP synthase (F(1)F(0) ATP synthase or Complex V) produces ATP from ADP in the presence of a proton gradient across the membrane which is generated by electron transport complexes of the respiratory chain. F-type ATPases consist of two structural domains, F(1) - containing the extramembraneous catalytic core and F(0) - containing the membrane proton channel, linked together by a central stalk and a peripheral stalk. During catalysis, ATP synthesis in the catalytic domain of F(1) is coupled via a rotary mechanism of the central stalk subunits to proton translocation. Part of the complex F(0) domain. Minor subunit located with subunit a in the membrane. This Aspergillus amstelodami protein is ATP synthase protein 8 (atp8).